The chain runs to 60 residues: DKCNKLVPLFYKTCPAGKNLCYKMFMVSDLTVPVKRGCIDVCPKNSALVKYVCCNTDRCN.

Intrachain disulfides connect cysteine 3–cysteine 21, cysteine 14–cysteine 38, cysteine 42–cysteine 53, and cysteine 54–cysteine 59.

Belongs to the three-finger toxin family. Short-chain subfamily. Type IA cytotoxin sub-subfamily. Monomer in solution; Homodimer and oligomer in the presence of negatively charged lipids forming a pore with a size ranging between 20 and 30 Angstroms. As to expression, expressed by the venom gland.

It localises to the secreted. The protein resides in the target cell membrane. In terms of biological role, shows cytolytic activity on many different cells by forming pore in lipid membranes. In vivo, increases heart rate or kills the animal by cardiac arrest. In addition, it binds to heparin with high affinity, interacts with Kv channel-interacting protein 1 (KCNIP1) in a calcium-independent manner, and binds to integrin alpha-V/beta-3 (ITGAV/ITGB3) with moderate affinity. This Naja sputatrix (Malayan spitting cobra) protein is Cytotoxin KJC3.